The following is a 340-amino-acid chain: tRNA N6-adenosine threonylcarbamoyltransferase (340 aa).

Residues His-111 and His-115 each contribute to the Fe cation site. Substrate is bound by residues 134–138, Asp-167, Gly-180, and Asn-276; that span reads LVSGG. A Fe cation-binding site is contributed by Asp-304.

Belongs to the KAE1 / TsaD family. The cofactor is Fe(2+).

It localises to the cytoplasm. It catalyses the reaction L-threonylcarbamoyladenylate + adenosine(37) in tRNA = N(6)-L-threonylcarbamoyladenosine(37) in tRNA + AMP + H(+). Functionally, required for the formation of a threonylcarbamoyl group on adenosine at position 37 (t(6)A37) in tRNAs that read codons beginning with adenine. Is involved in the transfer of the threonylcarbamoyl moiety of threonylcarbamoyl-AMP (TC-AMP) to the N6 group of A37, together with TsaE and TsaB. TsaD likely plays a direct catalytic role in this reaction. The sequence is that of tRNA N6-adenosine threonylcarbamoyltransferase from Helicobacter pylori (strain G27).